The chain runs to 363 residues: Protein TAX-1 (363 aa).

The segment at 129-363 (RYGNAEEILS…IPFRGVAAEQ (235 aa)) is required for localization to the flagellum and for flagellar motility. TPR repeat units lie at residues 157-190 (AELHQTFGLLYAADNKLDVSVKHLTCATYYLSVM) and 199-232 (TFAYFDLANVFATKACMEAAMALYDTVKNIWLKH).

As to quaternary structure, interacts with TTC29.

It localises to the cytoplasm. The protein localises to the cytoskeleton. Its subcellular location is the flagellum axoneme. Required for flagellum motility. In Trypanosoma brucei brucei (strain 927/4 GUTat10.1), this protein is Protein TAX-1.